Reading from the N-terminus, the 620-residue chain is Magnesium-chelatase 67 kDa subunit (620 aa).

An ATP-binding site is contributed by 33-40 (STVGSGKS). Residues 272–322 (ATRMPEREPNPEEMAQDEPPPQEEQPQDEAEDQNAPPDEADSDADEEQEET) are disordered. The span at 296–322 (QPQDEAEDQNAPPDEADSDADEEQEET) shows a compositional bias: acidic residues. The VWFA domain occupies 432–620 (LFIFMVDASG…AEQIVEAALS (189 aa)).

The protein belongs to the Mg-chelatase subunits D/I family.

It catalyses the reaction protoporphyrin IX + Mg(2+) + ATP + H2O = Mg-protoporphyrin IX + ADP + phosphate + 3 H(+). Its pathway is porphyrin-containing compound metabolism; bacteriochlorophyll biosynthesis. Its function is as follows. Involved in bacteriochlorophyll biosynthesis; introduces a magnesium ion into protoporphyrin IX to yield Mg-protoporphyrin IX. This is Magnesium-chelatase 67 kDa subunit (bchD) from Chlorobaculum tepidum (strain ATCC 49652 / DSM 12025 / NBRC 103806 / TLS) (Chlorobium tepidum).